A 416-amino-acid chain; its full sequence is MSTPLQGIKVLDFTGVQSGPSCTQMLAWFGADVIKIERPSVGDVTRHQLRDIPDIDALYFTMLNSNKRSIELNTKTAEGKEVMEKLIREADILVENFHPGAIDHMGFTWEHIQEINPRLIFGSIKGFDECSPYVNVKAYENVAQAAGGAASTTGFWDGPPLVSAAALGDSNTGMHLLIGLLAALLHREKTGRGQRVTMSMQDAVLNLCRVKLRDQQRLDKLGYLEEYPQYPNGTFGDAVPRGGNAGGGGQPGWILKCKGWETDPNAYIYFTIQEQNWENTCKAIGKPEWITDPAYSTAHARQPHIFDIFAEIEKYTVTIDKHEAVAYLTQFDIPCAPVLSMKEISLDPSLRQSGSVVEVEQPLRGKYLTVGCPMKFSAFTPDIKAAPLLGEHTAAVLQELGYSDDEIAAMKQNHAI.

Residues 17 to 18 (QS), Arg-38, 72 to 75 (LNTK), 96 to 98 (NFH), His-104, and 137 to 140 (KAYE) contribute to the CoA site. The Nucleophile role is filled by Asp-169. Substrate is bound at residue 248–250 (GGQ). CoA is bound at residue 273–275 (QEQ).

This sequence belongs to the CoA-transferase III family. Frc subfamily. Homodimer.

The enzyme catalyses formyl-CoA + oxalate = oxalyl-CoA + formate. The protein operates within metabolic intermediate degradation; oxalate degradation; CO(2) and formate from oxalate: step 1/2. Its function is as follows. Involved in the catabolism of oxalate and in the adapatation to low pH via the induction of the oxalate-dependent acid tolerance response (ATR). Catalyzes the transfer of the CoA moiety from formyl-CoA to oxalate. The sequence is that of Formyl-CoA:oxalate CoA-transferase from Escherichia coli O6:H1 (strain CFT073 / ATCC 700928 / UPEC).